A 289-amino-acid chain; its full sequence is 33 kDa chaperonin (289 aa).

2 disulfides stabilise this stretch: cysteine 237–cysteine 239 and cysteine 270–cysteine 273.

This sequence belongs to the HSP33 family. Post-translationally, under oxidizing conditions two disulfide bonds are formed involving the reactive cysteines. Under reducing conditions zinc is bound to the reactive cysteines and the protein is inactive.

It is found in the cytoplasm. In terms of biological role, redox regulated molecular chaperone. Protects both thermally unfolding and oxidatively damaged proteins from irreversible aggregation. Plays an important role in the bacterial defense system toward oxidative stress. The chain is 33 kDa chaperonin from Oceanobacillus iheyensis (strain DSM 14371 / CIP 107618 / JCM 11309 / KCTC 3954 / HTE831).